The sequence spans 305 residues: UDP-N-acetylenolpyruvoylglucosamine reductase (305 aa).

An FAD-binding PCMH-type domain is found at 34–199 (RVGGPAQVLF…TSARFRGEVK (166 aa)). The active site involves Arg-179. Ser-228 functions as the Proton donor in the catalytic mechanism. The active site involves Glu-298.

It belongs to the MurB family. Requires FAD as cofactor.

It localises to the cytoplasm. The catalysed reaction is UDP-N-acetyl-alpha-D-muramate + NADP(+) = UDP-N-acetyl-3-O-(1-carboxyvinyl)-alpha-D-glucosamine + NADPH + H(+). It participates in cell wall biogenesis; peptidoglycan biosynthesis. Its function is as follows. Cell wall formation. The protein is UDP-N-acetylenolpyruvoylglucosamine reductase of Bradyrhizobium diazoefficiens (strain JCM 10833 / BCRC 13528 / IAM 13628 / NBRC 14792 / USDA 110).